Reading from the N-terminus, the 426-residue chain is Alpha-ionylideneethane synthase abl3 (426 aa).

Belongs to the alpha-ionylideneethane synthase family.

Its pathway is hormone biosynthesis. In terms of biological role, alpha-ionylideneethane synthase; part of the gene cluster that mediates the biosynthesis of abscisic acid (ABA), a phytohormone that acts antagonistically toward salicylic acid (SA), jasmonic acid (JA) and ethylene (ETH) signaling, to impede plant defense responses. The first step of the pathway catalyzes the reaction from farnesyl diphosphate to alpha-ionylideneethane performed by the alpha-ionylideneethane synthase abl3 via a three-step reaction mechanism involving 2 neutral intermediates, beta-farnesene and allofarnesene. The cytochrome P450 monooxygenase abl1 might then be involved in the conversion of alpha-ionylideneethane to alpha-ionylideneacetic acid. Alpha-ionylideneacetic acid is further converted to abscisic acid in 2 steps involving the cytochrome P450 monooxygenase abl2 and the short-chain dehydrogenase/reductase abl4, via the intermediates 1'-deoxy-ABA or 1',4'-trans-diol-ABA, depending on the order of action of these 2 enzymes. Abl2 is responsible for the hydroxylation of carbon atom C-1' and abl4 might be involved in the oxidation of the C-4' carbon atom. In Leptosphaeria maculans (strain JN3 / isolate v23.1.3 / race Av1-4-5-6-7-8) (Blackleg fungus), this protein is Alpha-ionylideneethane synthase abl3.